The primary structure comprises 254 residues: Cell division protein ZapD (254 aa).

This sequence belongs to the ZapD family. Interacts with FtsZ.

The protein localises to the cytoplasm. Cell division factor that enhances FtsZ-ring assembly. Directly interacts with FtsZ and promotes bundling of FtsZ protofilaments, with a reduction in FtsZ GTPase activity. In Idiomarina loihiensis (strain ATCC BAA-735 / DSM 15497 / L2-TR), this protein is Cell division protein ZapD.